Here is a 54-residue protein sequence, read N- to C-terminus: Protein hunchback (54 aa).

3 C2H2-type zinc fingers span residues 1-3 (RKH), 9-31 (FQCDKCSYSCVNKSMLNSHRKFH), and 37-54 (YRCADCDYATKYCHSFKL).

This sequence belongs to the hunchback C2H2-type zinc-finger protein family.

The protein resides in the nucleus. In terms of biological role, gap class segmentation protein that controls development of head structures. In Calliphora vicina (Blue blowfly), this protein is Protein hunchback (hb).